The following is a 426-amino-acid chain: MVAPLAEVDPDIAELLGKELGRQRDTLEMIASENFVPRSVLQAQGSVLTNKYAEGLPGRRYYDGCEHVDVVENIARDRAKALFGADFANVQPHSGAQANAAVLHALMSPGERLLGLDLANGGHLTHGMRLNFSGKLYETGFYGVDATTHLIDMDAVRAKALEFRPKVLIAGWSAYPRILDFAAFRSIADEVGAKLWVDMAHFAGLVAVGLHPSPVPHADVVSTTVHKTLGGGRSGLILGKQEFATAINSAVFPGQQGGPLMHVIAGKAVALKIATTPEFTDRQQRTLAGARILADRLTAADVTKAGVSVVSGGTDVHLVLVDLRNSPFDGQAAEDLLHEVGITVNRNVVPNDPRPPMVTSGLRIGTPALATRGFGEAEFTEVADIIATVLTTGGSVDVAALRQQVTRLARDFPLYGGLEDWSLAGR.

Residues Leu-118 and 122-124 (GHL) contribute to the (6S)-5,6,7,8-tetrahydrofolate site. Lys-227 is modified (N6-(pyridoxal phosphate)lysine).

Belongs to the SHMT family. As to quaternary structure, homodimer. Pyridoxal 5'-phosphate serves as cofactor.

It localises to the cytoplasm. It carries out the reaction (6R)-5,10-methylene-5,6,7,8-tetrahydrofolate + glycine + H2O = (6S)-5,6,7,8-tetrahydrofolate + L-serine. Its pathway is one-carbon metabolism; tetrahydrofolate interconversion. It participates in amino-acid biosynthesis; glycine biosynthesis; glycine from L-serine: step 1/1. Catalyzes the reversible interconversion of serine and glycine with tetrahydrofolate (THF) serving as the one-carbon carrier. This reaction serves as the major source of one-carbon groups required for the biosynthesis of purines, thymidylate, methionine, and other important biomolecules. Also exhibits THF-independent aldolase activity toward beta-hydroxyamino acids, producing glycine and aldehydes, via a retro-aldol mechanism. The sequence is that of Serine hydroxymethyltransferase from Mycobacterium leprae (strain Br4923).